A 296-amino-acid polypeptide reads, in one-letter code: Phosphoribosylaminoimidazole-succinocarboxamide synthase (296 aa).

The protein belongs to the SAICAR synthetase family.

It carries out the reaction 5-amino-1-(5-phospho-D-ribosyl)imidazole-4-carboxylate + L-aspartate + ATP = (2S)-2-[5-amino-1-(5-phospho-beta-D-ribosyl)imidazole-4-carboxamido]succinate + ADP + phosphate + 2 H(+). It participates in purine metabolism; IMP biosynthesis via de novo pathway; 5-amino-1-(5-phospho-D-ribosyl)imidazole-4-carboxamide from 5-amino-1-(5-phospho-D-ribosyl)imidazole-4-carboxylate: step 1/2. The sequence is that of Phosphoribosylaminoimidazole-succinocarboxamide synthase from Geotalea uraniireducens (strain Rf4) (Geobacter uraniireducens).